The following is a 367-amino-acid chain: UDP-N-acetylglucosamine--N-acetylmuramyl-(pentapeptide) pyrophosphoryl-undecaprenol N-acetylglucosamine transferase (367 aa).

UDP-N-acetyl-alpha-D-glucosamine-binding positions include 15–17 (TGG), N127, R163, S191, I249, and Q294.

The protein belongs to the glycosyltransferase 28 family. MurG subfamily.

Its subcellular location is the cell inner membrane. The enzyme catalyses di-trans,octa-cis-undecaprenyl diphospho-N-acetyl-alpha-D-muramoyl-L-alanyl-D-glutamyl-meso-2,6-diaminopimeloyl-D-alanyl-D-alanine + UDP-N-acetyl-alpha-D-glucosamine = di-trans,octa-cis-undecaprenyl diphospho-[N-acetyl-alpha-D-glucosaminyl-(1-&gt;4)]-N-acetyl-alpha-D-muramoyl-L-alanyl-D-glutamyl-meso-2,6-diaminopimeloyl-D-alanyl-D-alanine + UDP + H(+). It functions in the pathway cell wall biogenesis; peptidoglycan biosynthesis. Functionally, cell wall formation. Catalyzes the transfer of a GlcNAc subunit on undecaprenyl-pyrophosphoryl-MurNAc-pentapeptide (lipid intermediate I) to form undecaprenyl-pyrophosphoryl-MurNAc-(pentapeptide)GlcNAc (lipid intermediate II). The polypeptide is UDP-N-acetylglucosamine--N-acetylmuramyl-(pentapeptide) pyrophosphoryl-undecaprenol N-acetylglucosamine transferase (Burkholderia vietnamiensis (strain G4 / LMG 22486) (Burkholderia cepacia (strain R1808))).